Reading from the N-terminus, the 466-residue chain is MATVDAILAAKYPAKAHARRVAERLQPHQDGRPGIIYLEAQKTRLIEDNDEPVPFRQRRPFFYLSGCLLPDSSLVYDITEDKLTLFIPPVDPEDVIWSGLPLSTDEALQQYDVDRVSITTEVNSTLASIASAHGGRAVAYNIADQVSPETKFDGFSEINKSVLKGAIEQSRVVKDEYEIALIRKANDISTKAHVAAIKASIIAENEREIEGAFIATCIANGAREQAYHPIVACGENGATLHYGRNSDALIDPVTKKKKRNVLIDAGGEYRTYCSDITRVFPLGGGFTTETRQIYEIVLQMQVECIEMLRDGVQWEEVHAHAHHVAIRGLLELGILRGSEDEIFEKRVSVAFFPHGLGHYLGMDTHDTGGNPNYADKDTMFRYLRVRGRLPAGSVITVEPGIYFCRFIIEPYLKSSESSKYIDTDVLERYWSVGGVRIEDNVLVTKDGYDNLTTTPKTVEEIESLAA.

Mn(2+) is bound by residues Asp264, Asp275, Glu398, and Glu438.

This sequence belongs to the peptidase M24B family. The cofactor is Mn(2+).

It carries out the reaction Release of any N-terminal amino acid, including proline, that is linked to proline, even from a dipeptide or tripeptide.. Catalyzes the removal of a penultimate prolyl residue from the N-termini of peptides. The chain is Probable Xaa-Pro aminopeptidase pepP (pepP) from Aspergillus clavatus (strain ATCC 1007 / CBS 513.65 / DSM 816 / NCTC 3887 / NRRL 1 / QM 1276 / 107).